The following is a 549-amino-acid chain: ATP synthase subunit alpha (549 aa).

Position 172–179 (172–179) interacts with ATP; that stretch reads GDRKTGKT. Positions 513–549 are disordered; the sequence is SSTGESVVPDEHVEAMDEEDLGKESVKVKKPAPQKKK. The span at 540 to 549 shows a compositional bias: basic residues; it reads VKKPAPQKKK.

This sequence belongs to the ATPase alpha/beta chains family. In terms of assembly, F-type ATPases have 2 components, CF(1) - the catalytic core - and CF(0) - the membrane proton channel. CF(1) has five subunits: alpha(3), beta(3), gamma(1), delta(1), epsilon(1). CF(0) has three main subunits: a(1), b(2) and c(9-12). The alpha and beta chains form an alternating ring which encloses part of the gamma chain. CF(1) is attached to CF(0) by a central stalk formed by the gamma and epsilon chains, while a peripheral stalk is formed by the delta and b chains.

It localises to the cell membrane. The catalysed reaction is ATP + H2O + 4 H(+)(in) = ADP + phosphate + 5 H(+)(out). In terms of biological role, produces ATP from ADP in the presence of a proton gradient across the membrane. The alpha chain is a regulatory subunit. The sequence is that of ATP synthase subunit alpha from Mycobacterium ulcerans (strain Agy99).